Consider the following 1350-residue polypeptide: MTRLMCLLMSLSIFVRGFDSQFVDMSPASNASECLESQVDAAAFSKLVWPYPIDPAKVDGIIYPLGRTYSNITLEYTGLFPLQGDLGMQYLYSVSHAVGNDGDPTKAYISNYSLLVNDFDNGFVVRIGAAANSTGTIVISPSVNTKIKKAYPAFILGSSLTNTSAGKPLYANYSLTIIPDGCGTVLHAFYCILKPRTGNRCPSGSDYNAYFIYETIHSDCQSTINRNASLNSFKSFFDLVNCTFFNSWDITADETKEWFGITQDTQGVHLHSSRKGDLYGGNMFRFATLPVYEGIKYYTVIPRSFRSKANKREAWAAFYVYKLHQLTYLLDFSVDGYIRRAIDCGHDDLSQLHCSYTSFEVDTGVYSVSSYEASATGTFIEQPNVTECDFSPMLTGVAPQVYNFKRLVFSNCNYNLTKLLSLFAVDEFSCNGISPDAIARGCYSTLTVDYFAYPLSMKSYIRPGSAGNIPLYNYKQSFANPTCRVMASVPDNVTITKPGAYGYISKCSRLTGVNQDIETPLYINPGEYSICRDFAPLGFSEDGQVFKRTLTQFEGGGLLIGVGTRVPMTANLEMGFVISVQYGTGTDSVCPMLDLGDSLTITNRLGKCVDYSLYGVTGRGVFQNCTAVGVKQQRFVYDSFDNLVGYYSDDGNYYCVRPCVSVPVSVIYDKSTNLHATLFGSVACEHVTTMMSQFSRLTQSNLRRRDSNTPLQTAVGCVIGLSNNSLVVSDCKLPLGQSLCAVPPVSMFRSYSASQFQLAVLNYTSPIVVTPINSSGFTAAIPTNFSFSLTQEYIETSIQKVTVDCKQYVCNGFTRCEKLLVEYGQFCSKINQALHGANLRQDESVYSLYSNIKTTSTQTLEYGLNGDFNLTLLQVPQIGGSSYRSAIEDLLFDKVTIADPGYMQGYDDCMKQGPQSARDLICAQYVSGYKVLPPLYDPNMEAAYTSSLLGSIAGAGWTAGLSSFAAIPFAQSMFYRLNGVGITQQVLSENQKLIANKFNQALGAMQTGFTTSNLAFSKVQDAVNANAQALSKLASELSNTFGAISSSISDILARLDTVEQDAQIDRLINGRLTSLNAFVSQQLVRSETAARSAQLASDKVNECVKSQSKRNGFCGSGTHIVSFVVNAPNGFYFFHVGYVPTNYTNVTAAYGLCNHNNPPLCIAPIDGYFITNQTTTYSVDTEWYYTGSSFFKPEPITQANSRYVSSDVKFEKLENNLPPPLLENSTDVDFKDELEEFFKNVTSHGPNFAEISKINTTLLDLSDEMAILQEVVKQLNDSYIDLKELGNYTYYNKWPWYIWLGFIAGLVALLLCVFFLLCCTGCGTSCLGKMKCKNCCDSYEEYDVEKIHVH.

Positions 1-12 (MTRLMCLLMSLS) are cleaved as a signal peptide. Residues 13 to 1295 (IFVRGFDSQF…GNYTYYNKWP (1283 aa)) are Extracellular-facing. The BetaCoV S1-NTD domain occupies 21–356 (QFVDMSPASN…DDLSQLHCSY (336 aa)). N-linked (GlcNAc...) asparagine; by host glycans are attached at residues asparagine 30, asparagine 71, asparagine 111, asparagine 132, asparagine 162, asparagine 172, asparagine 227, and asparagine 241. Intrachain disulfides connect cysteine 191/cysteine 242 and cysteine 344/cysteine 354. N-linked (GlcNAc...) asparagine; by host glycosylation occurs at asparagine 384. The 207-residue stretch at 386–592 (TECDFSPMLT…GTGTDSVCPM (207 aa)) folds into the BetaCoV S1-CTD domain. Cysteine 388 and cysteine 412 are joined by a disulfide. N-linked (GlcNAc...) asparagine; by host glycosylation is present at asparagine 415. Disulfide bonds link cysteine 430–cysteine 483 and cysteine 442–cysteine 590. Asparagine 492, asparagine 624, asparagine 723, asparagine 762, asparagine 773, asparagine 784, and asparagine 869 each carry an N-linked (GlcNAc...) asparagine; by host glycan. Fusion peptide stretches follow at residues 885–906 (SAIE…MQGY) and 904–926 (QGYD…AQYV). Residues cysteine 909 and cysteine 922 are joined by a disulfide bond. The segment at 991–1041 (QKLIANKFNQALGAMQTGFTTSNLAFSKVQDAVNANAQALSKLASELSNTF) is heptad repeat 1. Residues 1020-1064 (QDAVNANAQALSKLASELSNTFGAISSSISDILARLDTVEQDAQI) adopt a coiled-coil conformation. Asparagine 1142, asparagine 1145, asparagine 1172, asparagine 1224, asparagine 1240, asparagine 1255, asparagine 1276, and asparagine 1287 each carry an N-linked (GlcNAc...) asparagine; by host glycan. Residues 1245–1284 (GPNFAEISKINTTLLDLSDEMAILQEVVKQLNDSYIDLKE) are heptad repeat 2. A coiled-coil region spans residues 1257-1285 (TLLDLSDEMAILQEVVKQLNDSYIDLKEL). The chain crosses the membrane as a helical span at residues 1296 to 1316 (WYIWLGFIAGLVALLLCVFFL). Over 1317–1350 (LCCTGCGTSCLGKMKCKNCCDSYEEYDVEKIHVH) the chain is Cytoplasmic. The KxHxx motif lies at 1348–1350 (HVH).

It belongs to the betacoronaviruses spike protein family. As to quaternary structure, homotrimer; each monomer consists of a S1 and a S2 subunit. The resulting peplomers protrude from the virus surface as spikes. Post-translationally, specific enzymatic cleavages in vivo yield mature proteins. In terms of processing, specific enzymatic cleavages in vivo yield mature proteins. The precursor is processed into S1 and S2 by host cell furin or another cellular protease to yield the mature S1 and S2 proteins. Additionally, a second cleavage leads to the release of a fusion peptide after viral attachment to host cell receptor. The cytoplasmic Cys-rich domain is palmitoylated. Spike glycoprotein is digested within host endosomes.

It is found in the virion membrane. It localises to the host endoplasmic reticulum-Golgi intermediate compartment membrane. Its subcellular location is the host cell membrane. Functionally, attaches the virion to the cell membrane by interacting with host receptor, initiating the infection. Mediates fusion of the virion and cellular membranes by acting as a class I viral fusion protein. Under the current model, the protein has at least three conformational states: pre-fusion native state, pre-hairpin intermediate state, and post-fusion hairpin state. During viral and target cell membrane fusion, the coiled coil regions (heptad repeats) assume a trimer-of-hairpins structure, positioning the fusion peptide in close proximity to the C-terminal region of the ectodomain. The formation of this structure appears to drive apposition and subsequent fusion of viral and target cell membranes. Its function is as follows. Acts as a viral fusion peptide which is unmasked following S2 cleavage occurring upon virus endocytosis. The protein is Spike glycoprotein of Tylonycteris pachypus (Lesser bamboo bat).